The following is a 275-amino-acid chain: Small ribosomal subunit protein uS3 (275 aa).

The KH type-2 domain maps to 38-106 (IRRLLSSGLE…QVQLNILEVK (69 aa)). The interval 217 to 275 (AVPAGADRPRRERPAGSRPRRSGASGTTATGTEAGRAVGSEEPAAAESATTPEAQSTES) is disordered. Residues 238–275 (SGASGTTATGTEAGRAVGSEEPAAAESATTPEAQSTES) show a composition bias toward low complexity.

This sequence belongs to the universal ribosomal protein uS3 family. Part of the 30S ribosomal subunit. Forms a tight complex with proteins S10 and S14.

Its function is as follows. Binds the lower part of the 30S subunit head. Binds mRNA in the 70S ribosome, positioning it for translation. The protein is Small ribosomal subunit protein uS3 of Mycobacterium marinum (strain ATCC BAA-535 / M).